The chain runs to 157 residues: S-ribosylhomocysteine lyase (157 aa).

Positions 54, 58, and 124 each coordinate Fe cation.

The protein belongs to the LuxS family. Homodimer. Fe cation is required as a cofactor.

The enzyme catalyses S-(5-deoxy-D-ribos-5-yl)-L-homocysteine = (S)-4,5-dihydroxypentane-2,3-dione + L-homocysteine. Involved in the synthesis of autoinducer 2 (AI-2) which is secreted by bacteria and is used to communicate both the cell density and the metabolic potential of the environment. The regulation of gene expression in response to changes in cell density is called quorum sensing. Catalyzes the transformation of S-ribosylhomocysteine (RHC) to homocysteine (HC) and 4,5-dihydroxy-2,3-pentadione (DPD). The polypeptide is S-ribosylhomocysteine lyase (Lactobacillus acidophilus (strain ATCC 700396 / NCK56 / N2 / NCFM)).